The chain runs to 274 residues: Large ribosomal subunit protein uL2 (274 aa).

Disordered stretches follow at residues 28–55 and 224–274; these read APHA…RHVG and VAMN…RRRK.

The protein belongs to the universal ribosomal protein uL2 family. Part of the 50S ribosomal subunit. Forms a bridge to the 30S subunit in the 70S ribosome.

One of the primary rRNA binding proteins. Required for association of the 30S and 50S subunits to form the 70S ribosome, for tRNA binding and peptide bond formation. It has been suggested to have peptidyltransferase activity; this is somewhat controversial. Makes several contacts with the 16S rRNA in the 70S ribosome. This Pseudomonas putida (strain W619) protein is Large ribosomal subunit protein uL2.